Consider the following 212-residue polypeptide: 3-isopropylmalate dehydratase small subunit (212 aa).

It belongs to the LeuD family. LeuD type 1 subfamily. Heterodimer of LeuC and LeuD.

It carries out the reaction (2R,3S)-3-isopropylmalate = (2S)-2-isopropylmalate. It participates in amino-acid biosynthesis; L-leucine biosynthesis; L-leucine from 3-methyl-2-oxobutanoate: step 2/4. In terms of biological role, catalyzes the isomerization between 2-isopropylmalate and 3-isopropylmalate, via the formation of 2-isopropylmaleate. The polypeptide is 3-isopropylmalate dehydratase small subunit (Dechloromonas aromatica (strain RCB)).